Reading from the N-terminus, the 124-residue chain is Small ribosomal subunit protein uS12 (124 aa).

3-methylthioaspartic acid is present on Asp89.

The protein belongs to the universal ribosomal protein uS12 family. As to quaternary structure, part of the 30S ribosomal subunit. Contacts proteins S8 and S17. May interact with IF1 in the 30S initiation complex.

In terms of biological role, with S4 and S5 plays an important role in translational accuracy. Functionally, interacts with and stabilizes bases of the 16S rRNA that are involved in tRNA selection in the A site and with the mRNA backbone. Located at the interface of the 30S and 50S subunits, it traverses the body of the 30S subunit contacting proteins on the other side and probably holding the rRNA structure together. The combined cluster of proteins S8, S12 and S17 appears to hold together the shoulder and platform of the 30S subunit. In Nitratiruptor sp. (strain SB155-2), this protein is Small ribosomal subunit protein uS12.